We begin with the raw amino-acid sequence, 731 residues long: Polyadenylate-binding protein, cytoplasmic and nuclear (731 aa).

The span at 1–10 (MSADVSTTPA) shows a compositional bias: polar residues. Positions 1-51 (MSADVSTTPAAENVNGAAEASPAPAAAAPSATTPEVTAVENSTPAPAANQP) are disordered. The segment covering 17–39 (AAEASPAPAAAAPSATTPEVTAV) has biased composition (low complexity). RRM domains are found at residues 54–132 (ASLY…WSQR), 142–219 (GNVF…HHIS), 235–312 (TNVY…RAQK), and 338–472 (VNLY…LAQR). Disordered regions lie at residues 369–429 (VMRD…SDKK) and 603–665 (GGRG…NAQT). Gly residues predominate over residues 616–627 (GMRGGPGYGQGR). The segment covering 645-656 (QNAAAPAGPQEG) has biased composition (low complexity). A PABC domain is found at 658–731 (AGGVNAQTLG…MRPLAFTMST (74 aa)).

Belongs to the polyadenylate-binding protein type-1 family.

Its subcellular location is the cytoplasm. It is found in the nucleus. Functionally, binds the poly(A) tail of mRNA. Appears to be an important mediator of the multiple roles of the poly(A) tail in mRNA biogenesis, stability and translation. In the nucleus, involved in both mRNA cleavage and polyadenylation. Is also required for efficient mRNA export to the cytoplasm. Acts in concert with a poly(A)-specific nuclease (PAN) to affect poly(A) tail shortening, which may occur concomitantly with either nucleocytoplasmic mRNA transport or translational initiation. In the cytoplasm, stimulates translation initiation and regulates mRNA decay through translation termination-coupled poly(A) shortening, probably mediated by PAN. The sequence is that of Polyadenylate-binding protein, cytoplasmic and nuclear (pab1) from Aspergillus niger (strain ATCC MYA-4892 / CBS 513.88 / FGSC A1513).